The following is a 647-amino-acid chain: Nucleoside triphosphatase I (647 aa).

One can recognise a Helicase ATP-binding domain in the interval 48–213; sequence FIGLSELNSL…KYLINLLRPK (166 aa). An ATP-binding site is contributed by 61-68; sequence WDTGYGKT. Residues 150-153 carry the DEXH box motif; sequence DEVH. One can recognise a Helicase C-terminal domain in the interval 377 to 540; it reads YIEACKIILN…KINVLNSFMK (164 aa). Positions 466 to 532 are binding to the cap-specific mRNA (nucleoside-2'-O-)-methyltransferase; it reads DIIILDLPWK…DLIKSKQDKI (67 aa).

This sequence belongs to the helicase family. NPH I subfamily. In terms of assembly, monomer. Interacts (via C-terminus) with RAP94 (via N-terminus). Interacts with the cap-specific mRNA (nucleoside-2'-O-)-methyltransferase.

The protein localises to the virion. It catalyses the reaction a ribonucleoside 5'-triphosphate + H2O = a ribonucleoside 5'-diphosphate + phosphate + H(+). In terms of biological role, DNA-dependent ATPase required for providing the needed energy to achieve the termination of early transcripts. Acts in concert with the RAP94 subunit of the virion RNA polymerase and the capping enzyme/VTF to catalyze release of UUUUUNU-containing nascent RNA from the elongation complex. NPH-I must bind ssDNA in order to exhibit ATPase activity. This is Nucleoside triphosphatase I (NPH1) from Melanoplus sanguinipes entomopoxvirus (MsEPV).